A 478-amino-acid chain; its full sequence is Cysteine protease ATG4B (478 aa).

The span at 1-15 (MTSLPDRGVSSSSSD) shows a compositional bias: polar residues. Positions 1–31 (MTSLPDRGVSSSSSDPLCEGNIAPCSSSSEQ) are disordered. Residue C164 is the Nucleophile of the active site. Active-site residues include D361 and H363.

The protein belongs to the peptidase C54 family. In terms of assembly, interacts with ATG8.

It is found in the cytoplasm. The enzyme catalyses [protein]-C-terminal L-amino acid-glycyl-phosphatidylethanolamide + H2O = [protein]-C-terminal L-amino acid-glycine + a 1,2-diacyl-sn-glycero-3-phosphoethanolamine. Its function is as follows. Cysteine protease that plays a key role in autophagy by mediating both proteolytic activation and delipidation of ATG8 family proteins. The protease activity is required for proteolytic activation of ATG8 family proteins: cleaves the C-terminal amino acid of ATG8 proteins to reveal a C-terminal glycine. Exposure of the glycine at the C-terminus is essential for ATG8 proteins conjugation to phosphatidylethanolamine (PE) and insertion to membranes, which is necessary for autophagy. In addition to the protease activity, also mediates delipidation of PE-conjugated ATG8 proteins. The protein is Cysteine protease ATG4B (ATG4B) of Oryza sativa subsp. japonica (Rice).